The sequence spans 294 residues: Cuticle collagen 144 (294 aa).

The N-terminal stretch at 1 to 30 is a signal peptide; the sequence is MEKILVTISTGAASFAVLAVLFTIPSLYNT. Positions 100–112 are enriched in pro residues; sequence TCPPGPPGPPGQP. 2 disordered regions span residues 100–134 and 148–278; these read TCPP…TYAP and PQGP…GNDA. 2 triple-helical region regions span residues 102–127 and 153–274; these read PPGP…KGED and GPEG…PGLP. Low complexity-rich tracts occupy residues 164–209 and 219–265; these read AGPD…PGQD and APGA…DGQP.

As to quaternary structure, collagen polypeptide chains are complexed within the cuticle by disulfide bonds and other types of covalent cross-links.

Its function is as follows. Nematode cuticles are composed largely of collagen-like proteins. The cuticle functions both as an exoskeleton and as a barrier to protect the worm from its environment. The chain is Cuticle collagen 144 from Caenorhabditis briggsae.